A 307-amino-acid polypeptide reads, in one-letter code: N-myc-interactor (307 aa).

Residues 1–24 form a disordered region; the sequence is MEADKDDTQQILKEHSPDEFIKDE. A Phosphoserine modification is found at Ser16. Lys22 participates in a covalent cross-link: Glycyl lysine isopeptide (Lys-Gly) (interchain with G-Cter in ubiquitin). The stretch at 30–64 forms a coiled coil; that stretch reads IDEITKKNIQLKKEIQKLETELQEATKEFQIKEDI. NID domains lie at 103 to 192 and 201 to 292; these read GQAL…GEVD and GSAV…EVDV.

It belongs to the NMI family. Interacts with MYCN and MYC, as well as with other transcription factors with a Zip, HLH or a HLH-Zip motif. Interacts with all STAT proteins except STAT2. Interacts with IRF7, the interaction is direct and leads to the inhibition of IRF7-mediated type I IFN production. Interacts (via coiled-coil domain) with TRIM21 (via the SPRY domain); the interaction leads to 'Lys-63'-linked ubiquitination of NMI. Interacts with IFI35; the interaction is direct and is facilitated by TRIM21. Interacts with TLR4; the interaction is direct and leads to NF-kappa-B activation. In terms of assembly, (Microbial infection) Interacts with human cytomegalovirus protein UL23; this interaction inhibits NMI-mediated transcription of interferon-gamma stimulated genes. In terms of processing, ubiquitinated. 'Lys-63'-linked ubiquitination by TRIM21 promotes interaction with IFI35 and inhibits virus-triggered type I IFN-beta production. As to expression, expressed in adult spleen, liver, and kidney. Expressed in fetal thymus, liver, placenta, spleen, lung, and kidney but not brain. Expressed in macrophages.

It is found in the cytoplasm. The protein resides in the nucleus. It localises to the secreted. In terms of biological role, acts as a signaling pathway regulator involved in innate immune system response. In response to interleukin 2/IL2 and interferon IFN-gamma/IFNG, interacts with signal transducer and activator of transcription/STAT which activate the transcription of downstream genes involved in a multitude of signals for development and homeostasis. Enhances the recruitment of CBP/p300 coactivators to STAT1 and STAT5, resulting in increased STAT1- and STAT5-dependent transcription. In response to interferon IFN-alpha, associates in a complex with signaling pathway regulator IFI35 to regulate immune response; the complex formation prevents proteasome-mediated degradation of IFI35. In complex with IFI35, inhibits virus-triggered type I IFN-beta production when ubiquitinated by ubiquitin-protein ligase TRIM21. In complex with IFI35, negatively regulates nuclear factor NF-kappa-B signaling by inhibiting the nuclear translocation, activation and transcription of NF-kappa-B subunit p65/RELA, resulting in the inhibition of endothelial cell proliferation, migration and re-endothelialization of injured arteries. Negatively regulates virus-triggered type I interferon/IFN production by inducing proteosome-dependent degradation of IRF7, a transcriptional regulator of type I IFN, thereby interfering with cellular antiviral responses. Beside its role as an intracellular signaling pathway regulator, also functions extracellularly as damage-associated molecular patterns (DAMPs) to promote inflammation, when actively released by macrophage to the extracellular space during cell injury or pathogen invasion. Macrophage-secreted NMI activates NF-kappa-B signaling in adjacent macrophages through Toll-like receptor 4/TLR4 binding and activation, thereby inducing NF-kappa-B translocation from the cytoplasm into the nucleus which promotes the release of pro-inflammatory cytokines. The polypeptide is N-myc-interactor (Homo sapiens (Human)).